The sequence spans 455 residues: MLTCNDCSTWEQFVNYIKTRCSKTAFENWIAPIQVLEESSEKIRLEIPNIFVQSYLLDNYKKDLCSFVPLDAEGNPALEFVVAEIKRSSPLVTPSIAKPATEVSEENKDFQLKLNGAYRFDNFIEGPSNQFVKSAALGIAARPGRSYNPLFIHGGVGLGKTHLLHAVGHYVREHHKNLRIHCITTEAFINDLVHHLRVKSIDKMKNFYRSLDLLLVDDIQFLQNRQNFEEEFCNTFETLIHLSKQIVVTSDKPPGQLKLSERIIARMEWGLVAHVGVPDLETRVAILQHKAEQKGLNIPNEIAFYIADHVYGNVRQLEGAINKLTAYCLLFNKPLTETTVRDTLKELFRAPSKQKVSVESILKSVATVFQVKIQDLKGSSRAKNVPLARQVAMYLAKTLITDSLVAIGAAFGKTHSTVLYACKTIEQKIEKDALLKNQISLCKNNIAIDSPQHFV.

The interval Met-1–Ser-95 is domain I, interacts with DnaA modulators. The interval Ile-96 to Leu-112 is domain II. The tract at residues Lys-113 to Cys-328 is domain III, AAA+ region. Positions 157, 159, 160, and 161 each coordinate ATP. The segment at Leu-329–Val-455 is domain IV, binds dsDNA.

This sequence belongs to the DnaA family. As to quaternary structure, oligomerizes as a right-handed, spiral filament on DNA at oriC.

It is found in the cytoplasm. Its function is as follows. Plays an essential role in the initiation and regulation of chromosomal replication. ATP-DnaA binds to the origin of replication (oriC) to initiate formation of the DNA replication initiation complex once per cell cycle. Binds the DnaA box (a 9 base pair repeat at the origin) and separates the double-stranded (ds)DNA. Forms a right-handed helical filament on oriC DNA; dsDNA binds to the exterior of the filament while single-stranded (ss)DNA is stabiized in the filament's interior. The ATP-DnaA-oriC complex binds and stabilizes one strand of the AT-rich DNA unwinding element (DUE), permitting loading of DNA polymerase. After initiation quickly degrades to an ADP-DnaA complex that is not apt for DNA replication. Binds acidic phospholipids. The protein is Chromosomal replication initiator protein DnaA 2 of Chlamydia trachomatis serovar D (strain ATCC VR-885 / DSM 19411 / UW-3/Cx).